We begin with the raw amino-acid sequence, 134 residues long: MAKTLGLHIIADLYGVNPDLIDREEDIRHLLENSVKAGELTKISSHFYQFNPHGATGVILLAESHISIHTWPEHKTATVDVFTCGDPSKAYRAMDYIINSLSPTHVDKKVFDRGIIEDSKGKDVLWIMSKAGCC.

The active-site Schiff-base intermediate with substrate; via pyruvic acid is the Ser64. Ser64 is modified (pyruvic acid (Ser); by autocatalysis). His69 acts as the Proton acceptor; for processing activity in catalysis. Residue Cys84 is the Proton donor; for catalytic activity of the active site.

It belongs to the prokaryotic AdoMetDC family. Type 1 subfamily. In terms of assembly, heterotetramer of two alpha and two beta chains arranged as a dimer of alpha/beta heterodimers. Pyruvate is required as a cofactor. In terms of processing, is synthesized initially as an inactive proenzyme. Formation of the active enzyme involves a self-maturation process in which the active site pyruvoyl group is generated from an internal serine residue via an autocatalytic post-translational modification. Two non-identical subunits are generated from the proenzyme in this reaction, and the pyruvate is formed at the N-terminus of the alpha chain, which is derived from the carboxyl end of the proenzyme. The post-translation cleavage follows an unusual pathway, termed non-hydrolytic serinolysis, in which the side chain hydroxyl group of the serine supplies its oxygen atom to form the C-terminus of the beta chain, while the remainder of the serine residue undergoes an oxidative deamination to produce ammonia and the pyruvoyl group blocking the N-terminus of the alpha chain.

It carries out the reaction S-adenosyl-L-methionine + H(+) = S-adenosyl 3-(methylsulfanyl)propylamine + CO2. It participates in amine and polyamine biosynthesis; S-adenosylmethioninamine biosynthesis; S-adenosylmethioninamine from S-adenosyl-L-methionine: step 1/1. Functionally, catalyzes the decarboxylation of S-adenosylmethionine to S-adenosylmethioninamine (dcAdoMet), the propylamine donor required for the synthesis of the polyamines spermine and spermidine from the diamine putrescine. This is S-adenosylmethionine decarboxylase proenzyme from Hydrogenobaculum sp. (strain Y04AAS1).